A 332-amino-acid polypeptide reads, in one-letter code: Biotin synthase (332 aa).

Residues 53–282 (HFGKKVKLNM…TKEIRISGGR (230 aa)) form the Radical SAM core domain. 3 residues coordinate [4Fe-4S] cluster: cysteine 71, cysteine 75, and cysteine 78. [2Fe-2S] cluster is bound by residues cysteine 115, cysteine 147, cysteine 207, and arginine 277.

The protein belongs to the radical SAM superfamily. Biotin synthase family. As to quaternary structure, homodimer. The cofactor is [4Fe-4S] cluster. [2Fe-2S] cluster serves as cofactor.

The catalysed reaction is (4R,5S)-dethiobiotin + (sulfur carrier)-SH + 2 reduced [2Fe-2S]-[ferredoxin] + 2 S-adenosyl-L-methionine = (sulfur carrier)-H + biotin + 2 5'-deoxyadenosine + 2 L-methionine + 2 oxidized [2Fe-2S]-[ferredoxin]. Its pathway is cofactor biosynthesis; biotin biosynthesis; biotin from 7,8-diaminononanoate: step 2/2. Catalyzes the conversion of dethiobiotin (DTB) to biotin by the insertion of a sulfur atom into dethiobiotin via a radical-based mechanism. In Bacillus cereus (strain G9842), this protein is Biotin synthase.